A 127-amino-acid chain; its full sequence is Large ribosomal subunit protein bL17 (127 aa).

This sequence belongs to the bacterial ribosomal protein bL17 family. In terms of assembly, part of the 50S ribosomal subunit. Contacts protein L32.

The polypeptide is Large ribosomal subunit protein bL17 (Stenotrophomonas maltophilia (strain K279a)).